The following is a 311-amino-acid chain: Cytochrome f (311 aa).

The first 27 residues, 1–27 (MRRHLSLLIGSLVLGLSLLIAPAASWA), serve as a signal peptide directing secretion. Residues Tyr28, Cys48, Cys51, and His52 each coordinate heme. Residues 277-297 (IYGLLAFFAAVALAQIMLVLK) traverse the membrane as a helical segment.

This sequence belongs to the cytochrome f family. As to quaternary structure, the 4 large subunits of the cytochrome b6-f complex are cytochrome b6, subunit IV (17 kDa polypeptide, PetD), cytochrome f and the Rieske protein, while the 4 small subunits are PetG, PetL, PetM and PetN. The complex functions as a dimer. The cofactor is heme.

It is found in the cellular thylakoid membrane. Functionally, component of the cytochrome b6-f complex, which mediates electron transfer between photosystem II (PSII) and photosystem I (PSI), cyclic electron flow around PSI, and state transitions. The sequence is that of Cytochrome f from Parasynechococcus marenigrum (strain WH8102).